The chain runs to 92 residues: Small ribosomal subunit protein uS19c (92 aa).

The protein belongs to the universal ribosomal protein uS19 family.

Its subcellular location is the plastid. It is found in the chloroplast. Functionally, protein S19 forms a complex with S13 that binds strongly to the 16S ribosomal RNA. The protein is Small ribosomal subunit protein uS19c of Lemna minor (Common duckweed).